Reading from the N-terminus, the 396-residue chain is 1-deoxy-D-xylulose 5-phosphate reductoisomerase (396 aa).

The NADPH site is built by T13, G14, S15, I16, and N127. 1-deoxy-D-xylulose 5-phosphate is bound at residue K128. E129 is an NADPH binding site. D153 serves as a coordination point for Mn(2+). 1-deoxy-D-xylulose 5-phosphate contacts are provided by S154, E155, S184, and H207. E155 contributes to the Mn(2+) binding site. An NADPH-binding site is contributed by G213. The 1-deoxy-D-xylulose 5-phosphate site is built by S220, N225, K226, and E229. E229 contributes to the Mn(2+) binding site.

This sequence belongs to the DXR family. The cofactor is Mg(2+). Requires Mn(2+) as cofactor.

The enzyme catalyses 2-C-methyl-D-erythritol 4-phosphate + NADP(+) = 1-deoxy-D-xylulose 5-phosphate + NADPH + H(+). It participates in isoprenoid biosynthesis; isopentenyl diphosphate biosynthesis via DXP pathway; isopentenyl diphosphate from 1-deoxy-D-xylulose 5-phosphate: step 1/6. With respect to regulation, inhibited by fosmidomycin and 3-(N-acetyl-N-hydroxyamino)-propylphosphonic acid (FR-900098). Catalyzes the NADPH-dependent rearrangement and reduction of 1-deoxy-D-xylulose-5-phosphate (DXP) to 2-C-methyl-D-erythritol 4-phosphate (MEP). The chain is 1-deoxy-D-xylulose 5-phosphate reductoisomerase from Pseudomonas aeruginosa (strain ATCC 15692 / DSM 22644 / CIP 104116 / JCM 14847 / LMG 12228 / 1C / PRS 101 / PAO1).